Here is a 765-residue protein sequence, read N- to C-terminus: Protein O-mannosyl-transferase 2 (765 aa).

A disordered region spans residues 1–31 (MAASVVKTPKCPRRGSVKDVAQNAPRTAPTS). Residues 35 to 55 (ANWNWWLLLATVFLVTFATRF) form a helical membrane-spanning segment. N-linked (GlcNAc...) asparagine glycans are attached at residues Asn80, Asn106, and Asn119. A run of 5 helical transmembrane segments spans residues 128–148 (YFCTTLGALIMPMGFDTVYDL), 175–195 (ILLDPILLFFMMASVWGMVKV), 206–226 (GLRWWLWLFLTGTMLSCTISV), 228–248 (FVGLFVVLLVGLHTATELWLI), and 268–288 (ITLIVWPVLLYILFFYIHLSV). N-linked (GlcNAc...) asparagine glycosylation is found at Asn290 and Asn314. MIR domains are found at residues 318-374 (PRDV…IRPH), 384-440 (VQIL…VLIV), and 445-501 (NETV…VEDN). Asn445 carries N-linked (GlcNAc...) asparagine glycosylation. A run of 4 helical transmembrane segments spans residues 566-586 (IYLLGNPLIWWSNLVFLALFV), 667-687 (LFLGWMLHYLPFWAMGRVLYF), 689-709 (HYFPALIFNSLLTGVMYNYIL), and 719-739 (VILGLVLSILVYSFAAFSPLA). An N-linked (GlcNAc...) asparagine glycan is attached at Asn751.

The protein belongs to the glycosyltransferase 39 family. As to quaternary structure, interacts with Rt/POMT1. At the cellular blastoderm stage, expression accumulates in the ventrally located mesoderm primordium. At germ band extension, mesoderm expression is seen as stripes of strong expression. A very strong signal is also detected in the invaginating gut. As the germ band retracts, mesodermal expression decays and becomes restricted to somatic muscle precursors.

It is found in the endoplasmic reticulum membrane. The catalysed reaction is a di-trans,poly-cis-dolichyl beta-D-mannosyl phosphate + L-seryl-[protein] = 3-O-(alpha-D-mannosyl)-L-seryl-[protein] + a di-trans,poly-cis-dolichyl phosphate + H(+). The enzyme catalyses a di-trans,poly-cis-dolichyl beta-D-mannosyl phosphate + L-threonyl-[protein] = 3-O-(alpha-D-mannosyl)-L-threonyl-[protein] + a di-trans,poly-cis-dolichyl phosphate + H(+). It participates in protein modification; protein glycosylation. In terms of biological role, rt/POMT1 and tw/POMT2 function as a protein O-mannosyltransferase in association with each other to generate and maintain normal muscle development. The polypeptide is Protein O-mannosyl-transferase 2 (tw) (Drosophila melanogaster (Fruit fly)).